The primary structure comprises 336 residues: DNA-directed RNA polymerase subunit alpha (336 aa).

The tract at residues 1–232 (MIQKNWQELI…DQLSVFVNFD (232 aa)) is alpha N-terminal domain (alpha-NTD). Residues 248–336 (FNPALLKKVD…DLAKRYEDQY (89 aa)) form an alpha C-terminal domain (alpha-CTD) region.

The protein belongs to the RNA polymerase alpha chain family. As to quaternary structure, homodimer. The RNAP catalytic core consists of 2 alpha, 1 beta, 1 beta' and 1 omega subunit. When a sigma factor is associated with the core the holoenzyme is formed, which can initiate transcription.

It carries out the reaction RNA(n) + a ribonucleoside 5'-triphosphate = RNA(n+1) + diphosphate. In terms of biological role, DNA-dependent RNA polymerase catalyzes the transcription of DNA into RNA using the four ribonucleoside triphosphates as substrates. This is DNA-directed RNA polymerase subunit alpha from Sinorhizobium fredii (strain NBRC 101917 / NGR234).